Consider the following 90-residue polypeptide: U7-theraphotoxin-Hhn1b (90 aa).

Residues 1–19 (MKTAIFTVVLALAVFAVLS) form the signal peptide. Residues 20–50 (FGWEANEKALSEEFTELIHEKEAASETEARE) constitute a propeptide that is removed on maturation. 3 disulfides stabilise this stretch: Cys51–Cys65, Cys58–Cys70, and Cys64–Cys81.

This sequence belongs to the neurotoxin 10 (Hwtx-1) family. 13 (Hntx-13) subfamily. As to expression, expressed by the venom gland.

The protein localises to the secreted. Ion channel inhibitor. The sequence is that of U7-theraphotoxin-Hhn1b from Cyriopagopus hainanus (Chinese bird spider).